We begin with the raw amino-acid sequence, 94 residues long: Antifungal protein (94 aa).

The first 21 residues, 1–21 (MKFVSLASLGFALVAALGAVA), serve as a signal peptide directing secretion. A propeptide spanning residues 22–43 (TPVEADSLTAGGLDARDESAVL) is cleaved from the precursor. Intrachain disulfides connect Cys50-Cys76, Cys57-Cys83, Cys69-Cys71, and Cys92-Cys94.

Belongs to the antifungal protein pafB family.

The protein localises to the secreted. Its subcellular location is the host cytoplasm. Functionally, antifungal protein that acts as an inhibitor of growth of a variety of fungal species. This Aspergillus giganteus protein is Antifungal protein (afp).